The following is a 212-amino-acid chain: Large ribosomal subunit protein uL3 (212 aa).

A disordered region spans residues 119 to 147 (YQGNIKRWGQSRGPETHGSRYHRIPGSMG).

Belongs to the universal ribosomal protein uL3 family. As to quaternary structure, part of the 50S ribosomal subunit. Forms a cluster with proteins L14 and L19.

One of the primary rRNA binding proteins, it binds directly near the 3'-end of the 23S rRNA, where it nucleates assembly of the 50S subunit. In Lactobacillus acidophilus (strain ATCC 700396 / NCK56 / N2 / NCFM), this protein is Large ribosomal subunit protein uL3.